Reading from the N-terminus, the 689-residue chain is Acetyl-coenzyme A synthetase 2-like, mitochondrial (689 aa).

Residues 1 to 37 (MAARTLGRGVGRLLGSLRGLSGQPARPPCGVSAPRRA) constitute a mitochondrion transit peptide. The disordered stretch occupies residues 17-46 (LRGLSGQPARPPCGVSAPRRAASGPSGSAP). Residues 32–46 (SAPRRAASGPSGSAP) show a composition bias toward low complexity. Residues 224-227 (RGGR) and Thr-341 each bind CoA. The residue at position 396 (Lys-396) is an N6-acetyllysine. Residues 417-419 (GEP), 441-446 (DTWWQT), Asp-533, and Arg-548 contribute to the ATP site. Ser-556 serves as a coordination point for CoA. ATP is bound at residue Arg-559. N6-acetyllysine is present on Lys-642.

It belongs to the ATP-dependent AMP-binding enzyme family. In terms of assembly, interacts with SIRT3. In terms of processing, reversibly acetylated on Lys-642. The acetyl-CoA synthase activity is inhibited by acetylation and activated by deacetylation mediated by the deacetylase SIRT3.

The protein localises to the mitochondrion matrix. It carries out the reaction acetate + ATP + CoA = acetyl-CoA + AMP + diphosphate. The catalysed reaction is propanoate + ATP + CoA = propanoyl-CoA + AMP + diphosphate. With respect to regulation, inhibited by acetylation at Lys-642 and activated by deacetylation mediated by the deacetylase SIRT3. Its function is as follows. Catalyzes the synthesis of acetyl-CoA from short-chain fatty acids. Acetate is the preferred substrate. Can also utilize propionate with a much lower affinity. Provides acetyl-CoA that is utilized mainly for oxidation under ketogenic conditions. Involved in thermogenesis under ketogenic conditions, using acetate as a vital fuel when carbohydrate availability is insufficient. This Homo sapiens (Human) protein is Acetyl-coenzyme A synthetase 2-like, mitochondrial (ACSS1).